Here is a 256-residue protein sequence, read N- to C-terminus: 5-keto-4-deoxy-D-glucarate aldolase (256 aa).

His-50 acts as the Proton acceptor in catalysis. Gln-151 contacts substrate. Glu-153 contributes to the Mg(2+) binding site. The substrate site is built by Ser-178 and Asp-179. A Mg(2+)-binding site is contributed by Asp-179.

It belongs to the HpcH/HpaI aldolase family. KDGluc aldolase subfamily. In terms of assembly, homohexamer; trimer of dimers. The cofactor is Mg(2+).

It carries out the reaction 5-dehydro-4-deoxy-D-glucarate = 2-hydroxy-3-oxopropanoate + pyruvate. It catalyses the reaction 2-dehydro-3-deoxy-D-glucarate = 2-hydroxy-3-oxopropanoate + pyruvate. The protein operates within carbohydrate acid metabolism; galactarate degradation; D-glycerate from galactarate: step 2/3. Functionally, catalyzes the reversible retro-aldol cleavage of both 5-keto-4-deoxy-D-glucarate and 2-keto-3-deoxy-D-glucarate to pyruvate and tartronic semialdehyde. This is 5-keto-4-deoxy-D-glucarate aldolase from Shigella dysenteriae serotype 1 (strain Sd197).